Reading from the N-terminus, the 299-residue chain is HTH-type transcriptional regulator ArgP (299 aa).

The HTH lysR-type domain maps to 2-58 (FDYKLLSALAAVIEQAGFERAAQVLGLSQSAISQRIKLLEARVGQPVLVRVTPPAPT). The H-T-H motif DNA-binding region spans 19–38 (FERAAQVLGLSQSAISQRIK).

Belongs to the LysR transcriptional regulatory family. As to quaternary structure, homodimer.

Functionally, controls the transcription of genes involved in arginine and lysine metabolism. This is HTH-type transcriptional regulator ArgP from Pseudomonas fluorescens (strain ATCC BAA-477 / NRRL B-23932 / Pf-5).